A 328-amino-acid polypeptide reads, in one-letter code: MQHLKELTEKARNALDALDQGLDALEEFRVEYFGKKGHFTALMQELRNVSAEERPAIGAKINEAKQAILDILNAKKEAWEQEALNAKLAAESIDVSLPGRKTELGGLHPVSITIERVVKFFSELGFTVASGPEIETDYYNFDALNIPAHHPARADHDTFWFDAQRLLRTQTSGVQIRTMENMQPPIRIVAPGRVYRNDYDQTHTPMFHQIELLYVDKKANFTELKGLIHDFLKAFFEEDLQVRFRPSFFPFTEPSAEVDVMRQNGKWLEVLGCGMVHPNVLRNVGIDPEEYSGFAVGMGVERLTMLRYNVTDLRSFFENDLRFLKQFK.

Glutamate 253 provides a ligand contact to Mg(2+).

It belongs to the class-II aminoacyl-tRNA synthetase family. Phe-tRNA synthetase alpha subunit type 1 subfamily. In terms of assembly, tetramer of two alpha and two beta subunits. The cofactor is Mg(2+).

It is found in the cytoplasm. It carries out the reaction tRNA(Phe) + L-phenylalanine + ATP = L-phenylalanyl-tRNA(Phe) + AMP + diphosphate + H(+). In Actinobacillus pleuropneumoniae serotype 5b (strain L20), this protein is Phenylalanine--tRNA ligase alpha subunit.